The following is a 105-amino-acid chain: Large ribosomal subunit protein uL24 (105 aa).

Residues 67–105 (HISNLNPVDPKTGKATRIGRRKSSEGTLVRYSKKSGEEI) form a disordered region.

This sequence belongs to the universal ribosomal protein uL24 family. As to quaternary structure, part of the 50S ribosomal subunit.

One of two assembly initiator proteins, it binds directly to the 5'-end of the 23S rRNA, where it nucleates assembly of the 50S subunit. In terms of biological role, one of the proteins that surrounds the polypeptide exit tunnel on the outside of the subunit. The protein is Large ribosomal subunit protein uL24 of Bacteroides thetaiotaomicron (strain ATCC 29148 / DSM 2079 / JCM 5827 / CCUG 10774 / NCTC 10582 / VPI-5482 / E50).